Here is a 114-residue protein sequence, read N- to C-terminus: Acetyltransferase At1g77540 (114 aa).

The residue at position 2 (threonine 2) is an N-acetylthreonine. An N-acetyltransferase domain is found at 18–106 (KIVWNEGKRR…RNPSWKPLIH (89 aa)). Residues 52 to 55 (HTYV) and 61 to 66 (GLGLAS) each bind CoA. Cysteine 87 acts as the Nucleophile in catalysis. CoA-binding positions include 88–89 (SY), threonine 93, and arginine 97.

It is found in the peroxisome. Functionally, possesses in vitro histone acetyltransferase activity with histones H3 and H4. In Arabidopsis thaliana (Mouse-ear cress), this protein is Acetyltransferase At1g77540.